The following is a 659-amino-acid chain: Methionine--tRNA ligase (659 aa).

The 'HIGH' region signature appears at 13 to 23 (YYPSGNLHIGH). Residues 308 to 312 (KMSKS) carry the 'KMSKS' region motif. Lys311 contributes to the ATP binding site. The tRNA-binding domain occupies 559–659 (DFDKVEIKAA…SAIPNGAVIK (101 aa)).

The protein belongs to the class-I aminoacyl-tRNA synthetase family. MetG type 2B subfamily. In terms of assembly, homodimer.

The protein localises to the cytoplasm. The enzyme catalyses tRNA(Met) + L-methionine + ATP = L-methionyl-tRNA(Met) + AMP + diphosphate. Is required not only for elongation of protein synthesis but also for the initiation of all mRNA translation through initiator tRNA(fMet) aminoacylation. The protein is Methionine--tRNA ligase of Staphylococcus haemolyticus (strain JCSC1435).